We begin with the raw amino-acid sequence, 574 residues long: ATP-dependent lipid A-core flippase (574 aa).

A run of 4 helical transmembrane segments spans residues 11-31, 60-80, 156-176, and 244-264; these read LLSYLKPYWGIALLVLVGFGI, WFPLLIVLLVFFRGLGLFMGG, YTNWRLTLCIFIFMPIIGVLV, and LNSPLVQLVMAMAMSLIVWLA. One can recognise an ABC transmembrane type-1 domain in the interval 23–304; the sequence is LLVLVGFGIN…LTDVNEKLQR (282 aa). The ABC transporter domain maps to 335 to 570; sequence VRFDHVTLEY…QGAYFQLHQR (236 aa). 368-375 contributes to the ATP binding site; sequence GRSGAGKT.

It belongs to the ABC transporter superfamily. Lipid exporter (TC 3.A.1.106) family. Homodimer.

It localises to the cell inner membrane. It carries out the reaction ATP + H2O + lipid A-core oligosaccharideSide 1 = ADP + phosphate + lipid A-core oligosaccharideSide 2.. Involved in lipopolysaccharide (LPS) biosynthesis. Translocates lipid A-core from the inner to the outer leaflet of the inner membrane. Transmembrane domains (TMD) form a pore in the inner membrane and the ATP-binding domain (NBD) is responsible for energy generation. This is ATP-dependent lipid A-core flippase from Acinetobacter baylyi (strain ATCC 33305 / BD413 / ADP1).